Consider the following 550-residue polypeptide: Arginine--tRNA ligase (550 aa).

Positions 130–140 match the 'HIGH' region motif; that stretch reads ANPTGPIHLGG.

The protein belongs to the class-I aminoacyl-tRNA synthetase family. As to quaternary structure, monomer.

It localises to the cytoplasm. It carries out the reaction tRNA(Arg) + L-arginine + ATP = L-arginyl-tRNA(Arg) + AMP + diphosphate. This Rhodococcus jostii (strain RHA1) protein is Arginine--tRNA ligase.